The primary structure comprises 141 residues: uncharacterized protein (141 aa).

The HTH marR-type domain occupies Arg4–Lys139. The H-T-H motif DNA-binding region spans Val53–Glu76.

This is an uncharacterized protein from Bacillus subtilis (strain 168).